Consider the following 345-residue polypeptide: Probable 1-aminocyclopropane-1-carboxylate deaminase (345 aa).

The residue at position 58 (Lys58) is an N6-(pyridoxal phosphate)lysine. The Nucleophile role is filled by Ser85.

Belongs to the ACC deaminase/D-cysteine desulfhydrase family. It depends on pyridoxal 5'-phosphate as a cofactor.

The catalysed reaction is 1-aminocyclopropane-1-carboxylate + H2O = 2-oxobutanoate + NH4(+). Catalyzes a cyclopropane ring-opening reaction, the irreversible conversion of 1-aminocyclopropane-1-carboxylate (ACC) to ammonia and alpha-ketobutyrate. The polypeptide is Probable 1-aminocyclopropane-1-carboxylate deaminase (Cryptococcus neoformans var. neoformans serotype D (strain JEC21 / ATCC MYA-565) (Filobasidiella neoformans)).